The sequence spans 2185 residues: Genome polyprotein (2185 aa).

Glycine 2 carries N-myristoyl glycine; by host lipidation. At 2–1495 the chain is on the cytoplasmic side; sequence GAQVSTQKTG…HVNRAFICLQ (1494 aa). The interval 566-582 is amphipathic alpha-helix; sequence FFQGPPGEVMGRAIARV. Catalysis depends on for protease 2A activity residues histidine 872 and aspartate 890. Zn(2+) contacts are provided by cysteine 907 and cysteine 909. Cysteine 961 functions as the For protease 2A activity in the catalytic mechanism. Positions 967 and 969 each coordinate Zn(2+). The tract at residues 1101–1173 is membrane-binding; the sequence is NSGWLKKFTE…EQSAPSQSDQ (73 aa). Positions 1101-1239 are oligomerization; sequence NSGWLKKFTE…SPGAGKSVAT (139 aa). Residues 1122–1126 are RNA-binding; sequence AIKIQ. In terms of domain architecture, SF3 helicase spans 1205-1361; that stretch reads EKKMSNYIQF…SMYSQNGKIN (157 aa). Zn(2+) contacts are provided by cysteine 1369, cysteine 1381, and cysteine 1386. The C4-type; degenerate zinc finger occupies 1369-1386; that stretch reads CDEECCPVNFKKCCPLVC. An RNA-binding region spans residues 1413–1420; sequence EYNHRHSV. The tract at residues 1424-1429 is oligomerization; that stretch reads LEALFQ. Residues 1496 to 1511 lie within the membrane without spanning it; that stretch reads ALTTFVSVAGIIYIIY. At 1512-2185 the chain is on the cytoplasmic side; the sequence is KLFAGFQGAY…TLRRKWLDSF (674 aa). An O-(5'-phospho-RNA)-tyrosine modification is found at tyrosine 1521. The Peptidase C3 domain maps to 1541–1719; the sequence is GPAFEFAVAM…FSAALLRHYF (179 aa). Residues histidine 1580, glutamate 1611, and cysteine 1687 each act as for protease 3C activity in the active site. Residues 1950–2066 form the RdRp catalytic domain; it reads GHLIAFDYSG…SYPWPIDASL (117 aa). Residues aspartate 1956 and aspartate 2052 each coordinate Mg(2+).

This sequence belongs to the picornaviruses polyprotein family. Interacts with capsid protein VP1 and capsid protein VP3 to form heterotrimeric protomers. In terms of assembly, interacts with capsid protein VP0, and capsid protein VP3 to form heterotrimeric protomers. Five protomers subsequently associate to form pentamers which serve as building blocks for the capsid. Interacts with capsid protein VP2, capsid protein VP3 and capsid protein VP4 following cleavage of capsid protein VP0. Interacts with host CXADR. As to quaternary structure, interacts with capsid protein VP1 and capsid protein VP3 in the mature capsid. Interacts with capsid protein VP0 and capsid protein VP1 to form heterotrimeric protomers. Five protomers subsequently associate to form pentamers which serve as building blocks for the capsid. Interacts with capsid protein VP4 in the mature capsid. Interacts with protein 2C; this interaction may be important for virion morphogenesis. In terms of assembly, interacts with capsid protein VP1 and capsid protein VP3. As to quaternary structure, homodimer. Homohexamer; forms a hexameric ring structure with 6-fold symmetry characteristic of AAA+ ATPases. Interacts (via N-terminus) with host RTN3 (via reticulon domain); this interaction is important for viral replication. Interacts with capsid protein VP3; this interaction may be important for virion morphogenesis. In terms of assembly, interacts with protein 3CD. As to quaternary structure, homodimer. Interacts with host GBF1. Interacts (via GOLD domain) with host ACBD3 (via GOLD domain); this interaction allows the formation of a viral protein 3A/ACBD3 heterotetramer with a 2:2 stoichiometry, which will stimulate the recruitment of host PI4KB in order to synthesize PI4P at the viral RNA replication sites. Interacts with RNA-directed RNA polymerase. In terms of assembly, interacts with protein 3AB and with RNA-directed RNA polymerase. As to quaternary structure, interacts with Viral protein genome-linked and with protein 3CD. Mg(2+) is required as a cofactor. In terms of processing, specific enzymatic cleavages in vivo by the viral proteases yield processing intermediates and the mature proteins. Post-translationally, myristoylation is required for the formation of pentamers during virus assembly. Further assembly of 12 pentamers and a molecule of genomic RNA generates the provirion. During virion maturation, immature virions are rendered infectious following cleavage of VP0 into VP4 and VP2. This maturation seems to be an autocatalytic event triggered by the presence of RNA in the capsid and it is followed by a conformational change infectious virion. In terms of processing, myristoylation is required during RNA encapsidation and formation of the mature virus particle. Post-translationally, VPg is uridylylated by the polymerase into VPg-pUpU. This acts as a nucleotide-peptide primer for the genomic RNA replication.

Its subcellular location is the virion. It is found in the host cytoplasm. The protein resides in the host cytoplasmic vesicle membrane. It localises to the host nucleus. The enzyme catalyses a ribonucleoside 5'-triphosphate + H2O = a ribonucleoside 5'-diphosphate + phosphate + H(+). The catalysed reaction is Selective cleavage of Tyr-|-Gly bond in the picornavirus polyprotein.. It carries out the reaction RNA(n) + a ribonucleoside 5'-triphosphate = RNA(n+1) + diphosphate. It catalyses the reaction Selective cleavage of Gln-|-Gly bond in the poliovirus polyprotein. In other picornavirus reactions Glu may be substituted for Gln, and Ser or Thr for Gly.. With respect to regulation, replication or transcription is subject to high level of random mutations by the nucleotide analog ribavirin. In terms of biological role, forms an icosahedral capsid of pseudo T=3 symmetry with capsid proteins VP2 and VP3. The capsid is 300 Angstroms in diameter, composed of 60 copies of each capsid protein and enclosing the viral positive strand RNA genome. Capsid protein VP1 mainly forms the vertices of the capsid. Capsid protein VP1 interacts with host CXADR to provide virion attachment to target host cells. This attachment induces virion internalization. Tyrosine kinases are probably involved in the entry process. After binding to its receptor, the capsid undergoes conformational changes. Capsid protein VP1 N-terminus (that contains an amphipathic alpha-helix) and capsid protein VP4 are externalized. Together, they shape a pore in the host membrane through which viral genome is translocated to host cell cytoplasm. Functionally, forms an icosahedral capsid of pseudo T=3 symmetry with capsid proteins VP2 and VP3. The capsid is 300 Angstroms in diameter, composed of 60 copies of each capsid protein and enclosing the viral positive strand RNA genome. Lies on the inner surface of the capsid shell. After binding to the host receptor, the capsid undergoes conformational changes. Capsid protein VP4 is released, Capsid protein VP1 N-terminus is externalized, and together, they shape a pore in the host membrane through which the viral genome is translocated into the host cell cytoplasm. Its function is as follows. Component of immature procapsids, which is cleaved into capsid proteins VP4 and VP2 after maturation. Allows the capsid to remain inactive before the maturation step. In terms of biological role, cysteine protease that cleaves viral polyprotein and specific host proteins. It is responsible for the autocatalytic cleavage between the P1 and P2 regions, which is the first cleavage occurring in the polyprotein. Also cleaves the host translation initiation factor EIF4G1, in order to shut down the capped cellular mRNA translation. Inhibits the host nucleus-cytoplasm protein and RNA trafficking by cleaving host members of the nuclear pores. Counteracts stress granule formation probably by antagonizing its assembly or promoting its dissassembly. Functionally, plays an essential role in the virus replication cycle by acting as a viroporin. Creates a pore in the host endoplasmic reticulum and as a consequence releases Ca2+ in the cytoplasm of infected cell. In turn, high levels of cytoplasmic calcium may trigger membrane trafficking and transport of viral ER-associated proteins to viroplasms, sites of viral genome replication. Induces and associates with structural rearrangements of intracellular membranes. Displays RNA-binding, nucleotide binding and NTPase activities. May play a role in virion morphogenesis and viral RNA encapsidation by interacting with the capsid protein VP3. Its function is as follows. Localizes the viral replication complex to the surface of membranous vesicles. Together with protein 3CD binds the Cis-Active RNA Element (CRE) which is involved in RNA synthesis initiation. Acts as a cofactor to stimulate the activity of 3D polymerase, maybe through a nucleid acid chaperone activity. In terms of biological role, localizes the viral replication complex to the surface of membranous vesicles. It inhibits host cell endoplasmic reticulum-to-Golgi apparatus transport and causes the disassembly of the Golgi complex, possibly through GBF1 interaction. This would result in depletion of MHC, trail receptors and IFN receptors at the host cell surface. Plays an essential role in viral RNA replication by recruiting ACBD3 and PI4KB at the viral replication sites, thereby allowing the formation of the rearranged membranous structures where viral replication takes place. Functionally, acts as a primer for viral RNA replication and remains covalently bound to viral genomic RNA. VPg is uridylylated prior to priming replication into VPg-pUpU. The oriI viral genomic sequence may act as a template for this. The VPg-pUpU is then used as primer on the genomic RNA poly(A) by the RNA-dependent RNA polymerase to replicate the viral genome. During genome replication, the VPg-RNA linkage is removed by the host TDP2, thereby accelerating replication. During the late stage of the replication cycle, host TDP2 is excluded from sites of viral RNA synthesis and encapsidation, allowing for the generation of progeny virions. Involved in the viral replication complex and viral polypeptide maturation. It exhibits protease activity with a specificity and catalytic efficiency that is different from protease 3C. Protein 3CD lacks polymerase activity. Protein 3CD binds to the 5'UTR of the viral genome. Its function is as follows. Replicates the viral genomic RNA on the surface of intracellular membranes. May form linear arrays of subunits that propagate along a strong head-to-tail interaction called interface-I. Covalently attaches UMP to a tyrosine of VPg, which is used to prime RNA synthesis. The positive stranded RNA genome is first replicated at virus induced membranous vesicles, creating a dsRNA genomic replication form. This dsRNA is then used as template to synthesize positive stranded RNA genomes. ss(+)RNA genomes are either translated, replicated or encapsidated. In terms of biological role, major viral protease that mediates proteolytic processing of the polyprotein. Cleaves host EIF5B, contributing to host translation shutoff. Also cleaves host PABPC1, contributing to host translation shutoff. Cleaves host NLRP1, triggers host N-glycine-mediated degradation of the autoinhibitory NLRP1 N-terminal fragment. This is Genome polyprotein from Sus scrofa (Pig).